Here is a 133-residue protein sequence, read N- to C-terminus: Large ribosomal subunit protein eL32 (133 aa).

This sequence belongs to the eukaryotic ribosomal protein eL32 family.

The protein is Large ribosomal subunit protein eL32 (rpl32) of Dictyostelium discoideum (Social amoeba).